We begin with the raw amino-acid sequence, 359 residues long: MNYQDFISEQTEYYHLPVPFELEGGGVLTGVQVAYRTWGKLNSAGDNGVLICHALTGSADADEWWEGLLGANKALDSDRDFIICSNILGSCYGTTGATSINPQTGIPYGASFPAITIRDMVRLQAALIQHLGIKSLQLVIGGSLGGMQVLEWALLYPEIVQAIAPIATSGRHSAWCIGLSEAQRQAIYADPNWKGGNYTKEQPPSQGLAVARMMAMSAYRSWQSFTARFGRQYDAVADQFAIASYLQHHGQKLVQRFDANTYITLTQAMDSHDVAQGRDYKSVLQSIKQPALVVAIDSDILYPPTEQQELADFIPDAQLGWLQSSYGHDAFLIDIATLSQLVINFRQSLSLKTFSDVTT.

Residues 49–332 form the AB hydrolase-1 domain; the sequence is VLICHALTGS…QSSYGHDAFL (284 aa). The active-site Nucleophile is Ser-143. Arg-212 lines the substrate pocket. Residues Asp-299 and His-328 contribute to the active site. Asp-329 lines the substrate pocket.

Belongs to the AB hydrolase superfamily. MetX family. As to quaternary structure, homodimer.

It localises to the cytoplasm. It carries out the reaction L-homoserine + acetyl-CoA = O-acetyl-L-homoserine + CoA. It functions in the pathway amino-acid biosynthesis; L-methionine biosynthesis via de novo pathway; O-acetyl-L-homoserine from L-homoserine: step 1/1. In terms of biological role, transfers an acetyl group from acetyl-CoA to L-homoserine, forming acetyl-L-homoserine. This is Homoserine O-acetyltransferase from Trichormus variabilis (strain ATCC 29413 / PCC 7937) (Anabaena variabilis).